A 352-amino-acid polypeptide reads, in one-letter code: Ubiquitin thioesterase otulin (352 aa).

Residues 1-49 (MSRGTMPQPGAWPGASCAETPAREAGAAARDGGKVTAGAQPRAATRCPA) form a disordered region. Low complexity predominate over residues 18–30 (AETPAREAGAAAR). A coiled-coil region spans residues 49-73 (AEHEEDMYRAADEIEKEKELLIHER). A PIM motif motif is present at residues 52–57 (EEDMYR). Tyr-56 is modified (phosphotyrosine). 2 linear diubiquitin binding regions span residues 95–96 (EW) and 124–126 (RGD). The region spanning 118–346 (TSIRRVRGDN…DRHYNIPVRV (229 aa)) is the OTU domain. Residue Asp-126 is part of the active site. Cys-129 serves as the catalytic Nucleophile. Linear diubiquitin binding stretches follow at residues 255-259 (FFSVL), 283-289 (TGGLEQV), and 336-338 (DDR). His-339 is a catalytic residue. Residues 349-352 (ETSV) carry the PDZ-binding motif.

Belongs to the peptidase C65 family. Otulin subfamily. In terms of assembly, interacts (via the PUB domain) with RNF31 (via the PIM motif); the interaction is direct. Interacts with DVL2. Ubiquitinated. In terms of processing, acetylated. Post-translationally, phosphorylated. Phosphorylation at Tyr-56 prevents interaction with RNF31; dephosphorylation promotes interaction with RNF31 and the LUBAC complex.

It localises to the cytoplasm. The catalysed reaction is Thiol-dependent hydrolysis of ester, thioester, amide, peptide and isopeptide bonds formed by the C-terminal Gly of ubiquitin (a 76-residue protein attached to proteins as an intracellular targeting signal).. Deubiquitinase that specifically removes linear ('Met-1'-linked) polyubiquitin chains to substrates and acts as a regulator of angiogenesis and innate immune response. Required during angiogenesis, craniofacial and neuronal development by regulating the canonical Wnt signaling together with the LUBAC complex. Acts as a negative regulator of NF-kappa-B by regulating the activity of the LUBAC complex. OTULIN function is mainly restricted to homeostasis of the LUBAC complex: acts by removing 'Met-1'-linked autoubiquitination of the LUBAC complex, thereby preventing inactivation of the LUBAC complex. Acts as a key negative regulator of inflammation by restricting spontaneous inflammation and maintaining immune homeostasis. In myeloid cell, required to prevent unwarranted secretion of cytokines leading to inflammation and autoimmunity by restricting linear polyubiquitin formation. Plays a role in innate immune response by restricting linear polyubiquitin formation on LUBAC complex in response to NOD2 stimulation, probably to limit NOD2-dependent pro-inflammatory signaling. The chain is Ubiquitin thioesterase otulin from Mus musculus (Mouse).